The sequence spans 302 residues: Bifunctional ligase/repressor BirA (302 aa).

Positions 14-33 form a DNA-binding region, H-T-H motif; the sequence is QPKVRSELEKFSKNLEEDIQ. The region spanning 62-236 is the BPL/LPL catalytic domain; the sequence is QISTALFPYS…HLYTRLNIFE (175 aa). Biotin-binding positions include 80–82, Gln-103, 107–109, and Lys-167; these read STN and RGR.

It belongs to the biotin--protein ligase family.

It carries out the reaction biotin + L-lysyl-[protein] + ATP = N(6)-biotinyl-L-lysyl-[protein] + AMP + diphosphate + H(+). Acts both as a biotin--[acetyl-CoA-carboxylase] ligase and a biotin-operon repressor. In the presence of ATP, BirA activates biotin to form the BirA-biotinyl-5'-adenylate (BirA-bio-5'-AMP or holoBirA) complex. HoloBirA can either transfer the biotinyl moiety to the biotin carboxyl carrier protein (BCCP) subunit of acetyl-CoA carboxylase, or bind to the biotin operator site and inhibit transcription of the operon. In Haemophilus influenzae (strain ATCC 51907 / DSM 11121 / KW20 / Rd), this protein is Bifunctional ligase/repressor BirA.